A 435-amino-acid polypeptide reads, in one-letter code: MGQELCAKTVQPGCSCYHCSEGGEAHSCRRSQPETTEAAFKLTDLKEASCSMTSFHPRGLQAARAQKFKSKRPRSNSDCFQEEDLRQGFQWRKSLPFGAASSYLNLEKLGEGSYATVYKGISRINGQLVALKVISMNAEEGVPFTAIREASLLKGLKHANIVLLHDIIHTKETLTFVFEYMHTDLAQYMSQHPGGLHPHNVRLFMFQLLRGLAYIHHQHVLHRDLKPQNLLISHLGELKLADFGLARAKSIPSQTYSSEVVTLWYRPPDALLGATEYSSELDIWGAGCIFIEMFQGQPLFPGVSNILEQLEKIWEVLGVPTEDTWPGVSKLPNYNPEWFPLPTPRSLHVVWNRLGRVPEAEDLASQMLKGFPRDRVSAQEALVHDYFSALPSQLYQLPDEESLFTVSGVRLKPEMCDLLASYQKGHHPAQFSKCW.

The Protein kinase domain maps to 103–387 (YLNLEKLGEG…AQEALVHDYF (285 aa)). ATP contacts are provided by residues 109 to 117 (LGEGSYATV) and Lys132. Residue Asp224 is the Proton acceptor of the active site.

Belongs to the protein kinase superfamily. CMGC Ser/Thr protein kinase family. CDC2/CDKX subfamily. It depends on Mg(2+) as a cofactor.

It carries out the reaction L-seryl-[protein] + ATP = O-phospho-L-seryl-[protein] + ADP + H(+). The catalysed reaction is L-threonyl-[protein] + ATP = O-phospho-L-threonyl-[protein] + ADP + H(+). Its function is as follows. Serine/threonine-protein kinase that acts like an antiapoptotic protein that counters TRAIL/TNFSF10-induced apoptosis by inducing phosphorylation of BIRC5 at 'Thr-34'. This is Cyclin-dependent kinase 15 (CDK15) from Homo sapiens (Human).